Consider the following 294-residue polypeptide: MSEFKGCPFSGAASEAGTKAQGEGWHGAQMDFAKDMSYGDYLGLDQILSAQHPLSPDHNEMLFIVQHQTTELWMKLMLHELRAARESVKADSLPPAFKMLTRVSRIMDQLVQAWNVLATMTPPEYSAMRPYLGMSSGFQSFQYREIEFILGNKNAAMLKPHAHRPEHLALVETALKTPSLYDEAIRLMARRGFAVDADCVERDWTQPTAYNASVEAAWLEVYRNPSAHWELYELGEKFVDLEDSFRQWRFRHVTTVERVIGFKRGTGGTEGVSYLRKMLDVVLFPELWKLRTDL.

The interval 1–20 is disordered; that stretch reads MSEFKGCPFSGAASEAGTKA. Substrate contacts are provided by residues 63–67, Y125, and R129; that span reads FIVQH. Residue H252 coordinates heme. Residue T266 coordinates substrate.

This sequence belongs to the tryptophan 2,3-dioxygenase family. As to quaternary structure, homotetramer. Heme is required as a cofactor.

The enzyme catalyses L-tryptophan + O2 = N-formyl-L-kynurenine. It participates in amino-acid degradation; L-tryptophan degradation via kynurenine pathway; L-kynurenine from L-tryptophan: step 1/2. In terms of biological role, heme-dependent dioxygenase that catalyzes the oxidative cleavage of the L-tryptophan (L-Trp) pyrrole ring and converts L-tryptophan to N-formyl-L-kynurenine. Catalyzes the oxidative cleavage of the indole moiety. The chain is Tryptophan 2,3-dioxygenase from Cupriavidus necator (strain ATCC 17699 / DSM 428 / KCTC 22496 / NCIMB 10442 / H16 / Stanier 337) (Ralstonia eutropha).